Here is a 382-residue protein sequence, read N- to C-terminus: MRLHEYQAKQVFADAGIPTPASQLAETVDEAVDAAEEIGYPVAIKAQVHVGGRGKAGGIKLVESKEEAREAAEDIIGMDLKGYHVSKVLVEEAVDFVNELYVGVTMDRGEGRPVAMVSTKGGVNIEEVAEEDPDAIAREHIDPAFGMHPFQARKVVYEAGVDREVANDVASVLTTLYQLWDDRDGADTEINPLMITSDDEVIAADAVMNVDGDALFRQPEIAEMGEEAAEGDELEQKADEYGFDYVRLDGNVGIIGNGAGLVMTTLDLVDYYDGEPANFLDVGGGAKADRIANALDMVFSDENVDSVVFNIFGGITRGDEVANGINQALEQFDEIPKPVTVRLAGTNAEEGMEILNEDLVTVEHTLEDAVQRAVEYAKEVEA.

Positions 9–237 (KQVFADAGIP…AAEGDELEQK (229 aa)) constitute an ATP-grasp domain. ATP contacts are provided by residues Lys-45, 52-54 (GRG), Glu-91, Val-94, and Glu-99. Mg(2+) is bound by residues Asn-191 and Asp-205. Substrate contacts are provided by residues Asn-257 and 314-316 (GIT).

This sequence belongs to the succinate/malate CoA ligase beta subunit family. In terms of assembly, heterotetramer of two alpha and two beta subunits. Mg(2+) is required as a cofactor.

The enzyme catalyses succinate + ATP + CoA = succinyl-CoA + ADP + phosphate. The catalysed reaction is GTP + succinate + CoA = succinyl-CoA + GDP + phosphate. It participates in carbohydrate metabolism; tricarboxylic acid cycle; succinate from succinyl-CoA (ligase route): step 1/1. Its function is as follows. Succinyl-CoA synthetase functions in the citric acid cycle (TCA), coupling the hydrolysis of succinyl-CoA to the synthesis of either ATP or GTP and thus represents the only step of substrate-level phosphorylation in the TCA. The beta subunit provides nucleotide specificity of the enzyme and binds the substrate succinate, while the binding sites for coenzyme A and phosphate are found in the alpha subunit. The polypeptide is Succinate--CoA ligase [ADP-forming] subunit beta (Haloarcula marismortui (strain ATCC 43049 / DSM 3752 / JCM 8966 / VKM B-1809) (Halobacterium marismortui)).